A 41-amino-acid polypeptide reads, in one-letter code: Ornatin-A3 (41 aa).

The short motif at Arg-33–Asp-35 is the Cell attachment site element.

This sequence belongs to the ornatin family.

Its subcellular location is the secreted. Its function is as follows. Potent inhibitor of fibrinogen interaction with platelet receptors expressed on glycoprotein IIb-IIIa complex. May prevent blood from clotting during either feeding and/or storage of ingested blood. The protein is Ornatin-A3 of Placobdella ornata (Turtle leech).